A 218-amino-acid polypeptide reads, in one-letter code: uncharacterized protein (218 aa).

The span at 184–202 shows a compositional bias: basic and acidic residues; that stretch reads MDREEKRKEKEEKRKRELA. The disordered stretch occupies residues 184–218; the sequence is MDREEKRKEKEEKRKRELAARQLKRQEKKKQKTSK. The span at 205–218 shows a compositional bias: basic residues; it reads QLKRQEKKKQKTSK.

This is an uncharacterized protein from Mycoplasma pneumoniae (strain ATCC 29342 / M129 / Subtype 1) (Mycoplasmoides pneumoniae).